A 398-amino-acid polypeptide reads, in one-letter code: Phosphoglycerate kinase (398 aa).

Residues 21 to 23 (DFN), Arg-36, 59 to 62 (HFGR), Arg-117, and Arg-150 contribute to the substrate site. ATP is bound by residues Lys-200, Glu-321, and 351–354 (GGDS).

Belongs to the phosphoglycerate kinase family. As to quaternary structure, monomer.

It is found in the cytoplasm. It carries out the reaction (2R)-3-phosphoglycerate + ATP = (2R)-3-phospho-glyceroyl phosphate + ADP. The protein operates within carbohydrate degradation; glycolysis; pyruvate from D-glyceraldehyde 3-phosphate: step 2/5. The protein is Phosphoglycerate kinase of Wolbachia pipientis wMel.